An 81-amino-acid polypeptide reads, in one-letter code: Photosystem I iron-sulfur center (81 aa).

4Fe-4S ferredoxin-type domains follow at residues 2–31 and 39–68; these read SHSVKIYDTCIGCTQCVRACPTDVLEMIPW and IASAPRTEDCVGCKRCESACPTDFLSVRVY. Positions 11, 14, 17, 21, 48, 51, 54, and 58 each coordinate [4Fe-4S] cluster.

As to quaternary structure, the eukaryotic PSI reaction center is composed of at least 11 subunits. [4Fe-4S] cluster is required as a cofactor.

It localises to the plastid. It is found in the chloroplast thylakoid membrane. The catalysed reaction is reduced [plastocyanin] + hnu + oxidized [2Fe-2S]-[ferredoxin] = oxidized [plastocyanin] + reduced [2Fe-2S]-[ferredoxin]. Functionally, apoprotein for the two 4Fe-4S centers FA and FB of photosystem I (PSI); essential for photochemical activity. FB is the terminal electron acceptor of PSI, donating electrons to ferredoxin. The C-terminus interacts with PsaA/B/D and helps assemble the protein into the PSI complex. Required for binding of PsaD and PsaE to PSI. PSI is a plastocyanin-ferredoxin oxidoreductase, converting photonic excitation into a charge separation, which transfers an electron from the donor P700 chlorophyll pair to the spectroscopically characterized acceptors A0, A1, FX, FA and FB in turn. This Acorus calamus (Sweet flag) protein is Photosystem I iron-sulfur center.